Reading from the N-terminus, the 505-residue chain is Betaine aldehyde dehydrogenase (505 aa).

239–244 contributes to the NAD(+) binding site; it reads GSTATG. Glu261 acts as the Proton acceptor in catalysis. The active-site Nucleophile is Cys296. The short motif at 503–505 is the Microbody targeting signal element; it reads SKL.

This sequence belongs to the aldehyde dehydrogenase family. As to quaternary structure, homodimer.

It is found in the peroxisome. It carries out the reaction betaine aldehyde + NAD(+) + H2O = glycine betaine + NADH + 2 H(+). It participates in amine and polyamine biosynthesis; betaine biosynthesis via choline pathway; betaine from betaine aldehyde: step 1/1. In Hordeum vulgare (Barley), this protein is Betaine aldehyde dehydrogenase.